The chain runs to 461 residues: Lysosomal dipeptide transporter MFSD1 (461 aa).

The segment covering 1-13 (MADREEHQGLLDG) has biased composition (basic and acidic residues). Positions 1 to 22 (MADREEHQGLLDGDRDEDEGDK) are disordered. The Dileucine internalization motif motif lies at 10–11 (LL). Transmembrane regions (helical) follow at residues 37–57 (LLHR…SYFC), 81–101 (QLYA…GFLL), 111–131 (TVIF…GALA), 134–154 (FWLM…LAVA), 264–284 (LWLI…FIGL), 302–322 (AINS…GFLV), 331–351 (WVML…FTFW), 359–379 (LLGV…AFVV), 390–410 (FMQS…GSIL), and 416–436 (LFLE…VVLL).

This sequence belongs to the major facilitator superfamily. In terms of assembly, homodimer. Interacts with lysosomal protein GLMP (via lumenal domain); the interaction starts while both proteins are still in the endoplasmic reticulum and is required for stabilization of MFSD1 in lysosomes but has no direct effect on its targeting to lysosomes or transporter activity.

It is found in the lysosome membrane. The enzyme catalyses L-alpha-aminoacyl-L-arginine(out) = L-alpha-aminoacyl-L-arginine(in). It catalyses the reaction L-arginyl-L-alpha-amino acid(out) = L-arginyl-L-alpha-amino acid(in). It carries out the reaction L-arginyl-glycine(out) = L-arginyl-glycine(in). The catalysed reaction is L-alpha-aminoacyl-L-lysine(out) = L-alpha-aminoacyl-L-lysine(in). The enzyme catalyses L-aspartyl-L-lysine(out) = L-aspartyl-L-lysine(in). It catalyses the reaction L-alanyl-L-lysine(out) = L-alanyl-L-lysine(in). It carries out the reaction L-lysyl-L-alpha-amino acid(out) = L-lysyl-L-alpha-amino acid(in). The catalysed reaction is L-lysyl-L-alanine(out) = L-lysyl-L-alanine(in). The enzyme catalyses L-lysyl-L-lysine(out) = L-lysyl-L-lysine(in). It catalyses the reaction L-lysyl-glycine(out) = L-lysyl-glycine(in). It carries out the reaction L-alpha-aminoacyl-L-histidine(out) = L-alpha-aminoacyl-L-histidine(in). The catalysed reaction is L-histidyl-L-alpha-amino acid(out) = L-histidyl-L-alpha-amino acid(in). The enzyme catalyses L-histidyl-glycine(out) = L-histidyl-glycine(in). Its function is as follows. Lysosomal dipeptide uniporter that selectively exports lysine, arginine or histidine-containing dipeptides with a net positive charge from the lysosome lumen into the cytosol. Could play a role in a specific type of protein O-glycosylation indirectly regulating macrophages migration and tissue invasion. Also essential for liver homeostasis. The chain is Lysosomal dipeptide transporter MFSD1 (mfsd1) from Danio rerio (Zebrafish).